Here is a 311-residue protein sequence, read N- to C-terminus: Putative mitochondrial transporter UCP3 (311 aa).

The Mitochondrial intermembrane segment spans residues 1–10 (MVGLQPSERP). The chain crosses the membrane as a helical span at residues 11 to 32 (PTTSVKFLAAGTAACFADLLTF). Solcar repeat units follow at residues 11–105 (PTTS…VKQF), 114–205 (SSII…IKEK), and 214–299 (DNFP…MKRA). At 33–76 (PLDTAKVRLQIQGENQAALAARSAQYRGVLGTILTMVRTEGPRS) the chain is on the mitochondrial matrix side. The chain crosses the membrane as a helical span at residues 77 to 99 (LYSGLVAGLQRQMSFASIRIGLY). Residues 100–119 (DSVKQFYTPKGSDHSSIITR) lie on the Mitochondrial intermembrane side of the membrane. Residues 120-136 (ILAGCTTGAMAVTCAQP) form a helical membrane-spanning segment. The Mitochondrial matrix portion of the chain corresponds to 137 to 182 (TDVVKIRFQASMHTGLGGNRKYSGTMDAYRTIAREEGVRGLWKGIL). The helical transmembrane segment at 183–199 (PNITRNAIVNCGEMVTY) threads the bilayer. The Mitochondrial intermembrane segment spans residues 200–216 (DIIKEKLLDYHLLTDNF). Residues 217 to 236 (PCHFVSAFGAGFCATLVASP) traverse the membrane as a helical segment. At 237-270 (VDVVKTRYMNSPPGQYHSPFDCMLKMVTQEGPTA) the chain is on the mitochondrial matrix side. The chain crosses the membrane as a helical span at residues 271–293 (FYKGFTPSFLRLGSWNVVMFVTY). The interval 278-300 (SFLRLGSWNVVMFVTYEQMKRAL) is purine nucleotide binding. Residues 294 to 311 (EQMKRALMKVQMLRDSPF) lie on the Mitochondrial intermembrane side of the membrane.

It belongs to the mitochondrial carrier (TC 2.A.29) family. Interacts with HAX1; the interaction is direct and calcium-dependent.

The protein localises to the mitochondrion inner membrane. In terms of biological role, putative transmembrane transporter that plays a role in mitochondrial metabolism via an as yet unclear mechanism. Originally, this mitochondrial protein was thought to act as a proton transmembrane transporter from the mitochondrial intermembrane space into the matrix, causing proton leaks through the inner mitochondrial membrane, thereby uncoupling mitochondrial membrane potential generation from ATP synthesis. However, this function is controversial and uncoupling may not be the function, or at least not the main function, but rather a consequence of more conventional metabolite transporter activity. This chain is Putative mitochondrial transporter UCP3, found in Bos taurus (Bovine).